The chain runs to 211 residues: MATLTRQDLNFGQVVADILCEFLEVAIHLILYVRDIYPSGIFQKRQKYNVPVQMSCHPQLNQYIQDTLHCVKPLIEKNEAEKVVVVIMNKEHHPVERFVFEISQPPLLAISSETLLSHVEQLLRAMILKISVCDAVLDSNPPGCTFTVLVHTREAATRNMEKVQVIKDFPWIVADEQEVHMEEAKLIPLKTMTSDILKMQLYVEEKTQKSS.

The 191-residue stretch at 13–203 folds into the HORMA domain; the sequence is QVVADILCEF…SDILKMQLYV (191 aa).

As to quaternary structure, homooligomer. Interacts with rev1. Interacts with rev3l. Interacts with fzr1 (in complex with the anaphase promoting complex APC). May interact with cdc20.

Its subcellular location is the nucleus. The protein resides in the cytoplasm. The protein localises to the cytoskeleton. It localises to the spindle. Functionally, adapter protein able to interact with different proteins and involved in different biological processes. Mediates the interaction between the error-prone DNA polymerase zeta catalytic subunit rev3l and the inserter polymerase rev1, thereby mediating the second polymerase switching in translesion DNA synthesis. Translesion DNA synthesis releases the replication blockade of replicative polymerases, stalled in presence of DNA lesions. May also play a role in signal transduction in response to DNA damage. May regulate the activation of the anaphase promoting complex APC thereby regulating progression through the cell cycle. Through transcriptional regulation may play a role in epithelial-mesenchymal transdifferentiation. The sequence is that of Mitotic spindle assembly checkpoint protein MAD2B (mad2l2) from Danio rerio (Zebrafish).